We begin with the raw amino-acid sequence, 183 residues long: Ribosome-recycling factor (183 aa).

Belongs to the RRF family.

The protein localises to the cytoplasm. Responsible for the release of ribosomes from messenger RNA at the termination of protein biosynthesis. May increase the efficiency of translation by recycling ribosomes from one round of translation to another. This is Ribosome-recycling factor from Mycoplasma mobile (strain ATCC 43663 / 163K / NCTC 11711) (Mesomycoplasma mobile).